We begin with the raw amino-acid sequence, 202 residues long: LexA repressor 2 (202 aa).

Positions 28–48 (LAEISEAFGFASRSVARKHIV) form a DNA-binding region, H-T-H motif. Active-site for autocatalytic cleavage activity residues include serine 123 and lysine 160.

This sequence belongs to the peptidase S24 family. As to quaternary structure, homodimer.

The catalysed reaction is Hydrolysis of Ala-|-Gly bond in repressor LexA.. In terms of biological role, represses a number of genes involved in the response to DNA damage (SOS response), including recA and lexA. In the presence of single-stranded DNA, RecA interacts with LexA causing an autocatalytic cleavage which disrupts the DNA-binding part of LexA, leading to derepression of the SOS regulon and eventually DNA repair. In Pseudomonas syringae pv. tomato (strain ATCC BAA-871 / DC3000), this protein is LexA repressor 2.